The following is a 329-amino-acid chain: BTB/POZ domain-containing protein At1g55760 (329 aa).

Residues 164-231 enclose the BTB domain; sequence TDITINASDG…IYGNIQNEDF (68 aa).

Its pathway is protein modification; protein ubiquitination. Functionally, may act as a substrate-specific adapter of an E3 ubiquitin-protein ligase complex (CUL3-RBX1-BTB) which mediates the ubiquitination and subsequent proteasomal degradation of target proteins. The polypeptide is BTB/POZ domain-containing protein At1g55760 (Arabidopsis thaliana (Mouse-ear cress)).